The chain runs to 117 residues: Non-specific lipid-transfer protein (117 aa).

The N-terminal stretch at 1–26 is a signal peptide; it reads MACSAMTKLALVVALCMVVSVPIAQA. 4 cysteine pairs are disulfide-bonded: Cys29-Cys76, Cys39-Cys53, Cys54-Cys99, and Cys74-Cys113.

The protein belongs to the plant LTP family.

In terms of biological role, plant non-specific lipid-transfer proteins transfer phospholipids as well as galactolipids across membranes. May play a role in wax or cutin deposition in the cell walls of expanding epidermal cells and certain secretory tissues. In Prunus avium (Cherry), this protein is Non-specific lipid-transfer protein.